Consider the following 222-residue polypeptide: MKKMLTLLLSAGLVASIFGVMPAAAAPTVVNSTIVVPKGTTYDGQGKTFVANPSTLGDGSQAENQKPVFRLEAGATLKNVIIGAPAADGVHCYGSCNISNVVWEDVGEDALTLKSSGTVNITGGAAYKAYDKVFQMNASGTINIKNFRADDIGKLVRQNGGTSYAVNMTLDNSNISNVKDSIMRTDSSVSQGKITNTRYSKVPTLFKGFASGKTSQSGNTQY.

An N-terminal signal peptide occupies residues 1 to 25 (MKKMLTLLLSAGLVASIFGVMPAAA).

The protein belongs to the polysaccharide lyase 3 family. Ca(2+) serves as cofactor.

The protein resides in the secreted. The catalysed reaction is Eliminative cleavage of (1-&gt;4)-alpha-D-galacturonan to give oligosaccharides with 4-deoxy-alpha-D-galact-4-enuronosyl groups at their non-reducing ends.. It carries out the reaction Eliminative cleavage of (1-&gt;4)-alpha-D-galacturonan methyl ester to give oligosaccharides with 4-deoxy-6-O-methyl-alpha-D-galact-4-enuronosyl groups at their non-reducing ends.. It functions in the pathway glycan metabolism; pectin degradation; 2-dehydro-3-deoxy-D-gluconate from pectin: step 2/5. With respect to regulation, strongly inhibited by Ba(2+). To a lesser extent, is also inhibited by Sn(2+), Mg(2+) and Ag(+). Inhibited by EDTA in vitro. In terms of biological role, catalyzes the depolymerization of both polygalacturonate and pectins of methyl esterification degree from 22 to 89%, with an endo mode of action. In contrast to the majority of pectate lyases, displays high activity on highly methylated pectins. Is not able to cleave trigalacturonate. Does not degrade xylans and carboxymethylcellulose (CMC). This is Pectate lyase A (pelA) from Paenibacillus barcinonensis.